The primary structure comprises 425 residues: Serine--tRNA ligase (425 aa).

233-235 provides a ligand contact to L-serine; sequence TAE. 264-266 is an ATP binding site; that stretch reads RAE. E287 is an L-serine binding site. 351-354 provides a ligand contact to ATP; sequence EISS. S387 contributes to the L-serine binding site.

This sequence belongs to the class-II aminoacyl-tRNA synthetase family. Type-1 seryl-tRNA synthetase subfamily. In terms of assembly, homodimer. The tRNA molecule binds across the dimer.

The protein localises to the cytoplasm. The catalysed reaction is tRNA(Ser) + L-serine + ATP = L-seryl-tRNA(Ser) + AMP + diphosphate + H(+). The enzyme catalyses tRNA(Sec) + L-serine + ATP = L-seryl-tRNA(Sec) + AMP + diphosphate + H(+). Its pathway is aminoacyl-tRNA biosynthesis; selenocysteinyl-tRNA(Sec) biosynthesis; L-seryl-tRNA(Sec) from L-serine and tRNA(Sec): step 1/1. In terms of biological role, catalyzes the attachment of serine to tRNA(Ser). Is also able to aminoacylate tRNA(Sec) with serine, to form the misacylated tRNA L-seryl-tRNA(Sec), which will be further converted into selenocysteinyl-tRNA(Sec). The chain is Serine--tRNA ligase from Clostridium botulinum (strain Eklund 17B / Type B).